Here is a 486-residue protein sequence, read N- to C-terminus: Membrane-bound lytic murein transglycosylase F (486 aa).

A signal peptide spans 1 to 21 (MTRIKLNYFVIGVVALLLALA). The tract at residues 22 to 268 (LWPNIPWRNG…RLEEKYLGHV (247 aa)) is non-LT domain. The segment at 269 to 486 (GSFDYVDTKT…VVGPGWSINN (218 aa)) is LT domain. Glu-313 is a catalytic residue.

The protein in the N-terminal section; belongs to the bacterial solute-binding protein 3 family. This sequence in the C-terminal section; belongs to the transglycosylase Slt family.

The protein localises to the cell outer membrane. The catalysed reaction is Exolytic cleavage of the (1-&gt;4)-beta-glycosidic linkage between N-acetylmuramic acid (MurNAc) and N-acetylglucosamine (GlcNAc) residues in peptidoglycan, from either the reducing or the non-reducing ends of the peptidoglycan chains, with concomitant formation of a 1,6-anhydrobond in the MurNAc residue.. In terms of biological role, murein-degrading enzyme that degrades murein glycan strands and insoluble, high-molecular weight murein sacculi, with the concomitant formation of a 1,6-anhydromuramoyl product. Lytic transglycosylases (LTs) play an integral role in the metabolism of the peptidoglycan (PG) sacculus. Their lytic action creates space within the PG sacculus to allow for its expansion as well as for the insertion of various structures such as secretion systems and flagella. This Yersinia enterocolitica serotype O:8 / biotype 1B (strain NCTC 13174 / 8081) protein is Membrane-bound lytic murein transglycosylase F.